The following is a 368-amino-acid chain: Carbamoyl phosphate synthase small chain (368 aa).

The interval 1–178 (MKAVLGLEDG…GAAGAWKGSG (178 aa)) is CPSase. L-glutamine is bound by residues S45, G230, and G232. The Glutamine amidotransferase type-1 domain maps to 182–368 (HAVVVDLGIK…KVVKVLGGGL (187 aa)). The Nucleophile role is filled by C257. Residues F258, Q261, N299, G301, and Y302 each coordinate L-glutamine. Residues H342 and E344 contribute to the active site.

Belongs to the CarA family. In terms of assembly, composed of two chains; the small (or glutamine) chain promotes the hydrolysis of glutamine to ammonia, which is used by the large (or ammonia) chain to synthesize carbamoyl phosphate. Tetramer of heterodimers (alpha,beta)4.

It carries out the reaction hydrogencarbonate + L-glutamine + 2 ATP + H2O = carbamoyl phosphate + L-glutamate + 2 ADP + phosphate + 2 H(+). The enzyme catalyses L-glutamine + H2O = L-glutamate + NH4(+). It participates in amino-acid biosynthesis; L-arginine biosynthesis; carbamoyl phosphate from bicarbonate: step 1/1. Its pathway is pyrimidine metabolism; UMP biosynthesis via de novo pathway; (S)-dihydroorotate from bicarbonate: step 1/3. In terms of biological role, small subunit of the glutamine-dependent carbamoyl phosphate synthetase (CPSase). CPSase catalyzes the formation of carbamoyl phosphate from the ammonia moiety of glutamine, carbonate, and phosphate donated by ATP, constituting the first step of 2 biosynthetic pathways, one leading to arginine and/or urea and the other to pyrimidine nucleotides. The small subunit (glutamine amidotransferase) binds and cleaves glutamine to supply the large subunit with the substrate ammonia. In Methanosarcina mazei (strain ATCC BAA-159 / DSM 3647 / Goe1 / Go1 / JCM 11833 / OCM 88) (Methanosarcina frisia), this protein is Carbamoyl phosphate synthase small chain.